Here is a 95-residue protein sequence, read N- to C-terminus: Small ribosomal subunit protein bS6 (95 aa).

It belongs to the bacterial ribosomal protein bS6 family.

Binds together with bS18 to 16S ribosomal RNA. The sequence is that of Small ribosomal subunit protein bS6 from Shouchella clausii (strain KSM-K16) (Alkalihalobacillus clausii).